Here is a 312-residue protein sequence, read N- to C-terminus: Pyridoxal 5'-phosphate synthase subunit PDX1 (312 aa).

Asp43 serves as a coordination point for D-ribose 5-phosphate. Lys100 acts as the Schiff-base intermediate with D-ribose 5-phosphate in catalysis. Gly172 is a binding site for D-ribose 5-phosphate. A D-glyceraldehyde 3-phosphate-binding site is contributed by Arg184. Residues Gly233 and 254–255 each bind D-ribose 5-phosphate; that span reads GS.

This sequence belongs to the PdxS/SNZ family.

The catalysed reaction is aldehydo-D-ribose 5-phosphate + D-glyceraldehyde 3-phosphate + L-glutamine = pyridoxal 5'-phosphate + L-glutamate + phosphate + 3 H2O + H(+). Its pathway is cofactor biosynthesis; pyridoxal 5'-phosphate biosynthesis. In terms of biological role, catalyzes the formation of pyridoxal 5'-phosphate from ribose 5-phosphate (RBP), glyceraldehyde 3-phosphate (G3P) and ammonia. The ammonia is provided by PDX2. Can also use ribulose 5-phosphate and dihydroxyacetone phosphate as substrates, resulting from enzyme-catalyzed isomerization of RBP and G3P, respectively. Also plays an indirect role in resistance to singlet oxygen-generating photosensitizers. The protein is Pyridoxal 5'-phosphate synthase subunit PDX1 (PDX1) of Phaseolus vulgaris (Kidney bean).